The primary structure comprises 211 residues: Large ribosomal subunit protein uL3 (211 aa).

The disordered stretch occupies residues 134–155; that stretch reads ATHGNSLSHRAPGSIGQNQTPG. Q152 carries the post-translational modification N5-methylglutamine.

This sequence belongs to the universal ribosomal protein uL3 family. As to quaternary structure, part of the 50S ribosomal subunit. Forms a cluster with proteins L14 and L19. In terms of processing, methylated by PrmB.

One of the primary rRNA binding proteins, it binds directly near the 3'-end of the 23S rRNA, where it nucleates assembly of the 50S subunit. The sequence is that of Large ribosomal subunit protein uL3 from Methylococcus capsulatus (strain ATCC 33009 / NCIMB 11132 / Bath).